The following is an 896-amino-acid chain: Vacuolar zinc transporter TgZnT (896 aa).

Residues Met1–Lys472 lie on the Cytoplasmic side of the membrane. Residues Val82–Val91 are compositionally biased toward basic and acidic residues. Disordered stretches follow at residues Val82–Phe104, Met205–Ala227, and Ser255–Ser329. 2 stretches are compositionally biased toward low complexity: residues Ser210–Pro225 and Ser255–Ser266. Over residues Val303–Asp322 the composition is skewed to basic and acidic residues. The chain crosses the membrane as a helical span at residues Leu473 to Leu493. Residues Ala494–Asp502 lie on the Vacuolar side of the membrane. The helical transmembrane segment at Ala503–Ser523 threads the bilayer. Residues Glu524–Glu539 are Cytoplasmic-facing. Residues Ile540–Ala560 form a helical membrane-spanning segment. Residues Ala561 to Gly573 lie on the Vacuolar side of the membrane. The chain crosses the membrane as a helical span at residues Glu574–Leu594. At Lys595–Tyr737 the chain is on the cytoplasmic side. The disordered stretch occupies residues Leu621 to Ser707. The span at Arg656–Arg680 shows a compositional bias: basic and acidic residues. A helical transmembrane segment spans residues Ile738–Trp758. The Vacuolar segment spans residues Trp759–Asp762. A helical transmembrane segment spans residues Trp763–Leu783. The Cytoplasmic portion of the chain corresponds to Ser784–Arg896.

It belongs to the cation diffusion facilitator (CDF) transporter (TC 2.A.4) family. SLC30A subfamily.

The protein localises to the vacuole membrane. It is found in the cytoplasmic vesicle membrane. In terms of biological role, vacuolar zinc transporter that is probably involved in the transfer of zinc ions from the cytosol to the vacuole for intracellular storage. Plays an essential role in extracellular zinc tolerance. The chain is Vacuolar zinc transporter TgZnT from Toxoplasma gondii (strain ATCC 50853 / GT1).